A 472-amino-acid chain; its full sequence is Cysteine--tRNA ligase (472 aa).

Cys-28 is a binding site for Zn(2+). The short motif at Pro-30 to Asn-40 is the 'HIGH' region element. Zn(2+) is bound by residues Cys-212, His-237, and Glu-241. Residues Lys-271–Ser-275 carry the 'KMSKS' region motif. Residue Lys-274 coordinates ATP.

The protein belongs to the class-I aminoacyl-tRNA synthetase family. In terms of assembly, monomer. Zn(2+) is required as a cofactor.

The protein localises to the cytoplasm. The enzyme catalyses tRNA(Cys) + L-cysteine + ATP = L-cysteinyl-tRNA(Cys) + AMP + diphosphate. The sequence is that of Cysteine--tRNA ligase from Limosilactobacillus fermentum (strain NBRC 3956 / LMG 18251) (Lactobacillus fermentum).